Reading from the N-terminus, the 155-residue chain is NADPH-dependent 7-cyano-7-deazaguanine reductase (155 aa).

The Thioimide intermediate role is filled by cysteine 53. Residue aspartate 60 is the Proton donor of the active site. Residues 75–77 (VES) and 94–95 (HE) each bind substrate.

The protein belongs to the GTP cyclohydrolase I family. QueF type 1 subfamily.

It localises to the cytoplasm. The catalysed reaction is 7-aminomethyl-7-carbaguanine + 2 NADP(+) = 7-cyano-7-deazaguanine + 2 NADPH + 3 H(+). The protein operates within tRNA modification; tRNA-queuosine biosynthesis. Catalyzes the NADPH-dependent reduction of 7-cyano-7-deazaguanine (preQ0) to 7-aminomethyl-7-deazaguanine (preQ1). This Ruegeria pomeroyi (strain ATCC 700808 / DSM 15171 / DSS-3) (Silicibacter pomeroyi) protein is NADPH-dependent 7-cyano-7-deazaguanine reductase.